Consider the following 350-residue polypeptide: D-alanine--D-alanine ligase (350 aa).

One can recognise an ATP-grasp domain in the interval 143 to 344; that stretch reads KRILSTFGIS…FKSLINKLIL (202 aa). 172-227 lines the ATP pocket; it reads INNIKFPCCIKPSNQGSSFGVNVANDFISLKESIDVAFLYSKKILIEPFIQGREIE. Mg(2+) is bound by residues aspartate 298, glutamate 311, and asparagine 313.

This sequence belongs to the D-alanine--D-alanine ligase family. It depends on Mg(2+) as a cofactor. Mn(2+) serves as cofactor.

It is found in the cytoplasm. It catalyses the reaction 2 D-alanine + ATP = D-alanyl-D-alanine + ADP + phosphate + H(+). Its pathway is cell wall biogenesis; peptidoglycan biosynthesis. Cell wall formation. This Wigglesworthia glossinidia brevipalpis protein is D-alanine--D-alanine ligase.